The following is a 99-amino-acid chain: Large ribosomal subunit protein bL21 (99 aa).

It belongs to the bacterial ribosomal protein bL21 family. Part of the 50S ribosomal subunit. Contacts protein L20.

Its function is as follows. This protein binds to 23S rRNA in the presence of protein L20. This Neorickettsia sennetsu (strain ATCC VR-367 / Miyayama) (Ehrlichia sennetsu) protein is Large ribosomal subunit protein bL21.